Here is a 732-residue protein sequence, read N- to C-terminus: Engulfment and cell motility protein 2 (732 aa).

Tyrosine 48 carries the post-translational modification Phosphotyrosine. In terms of domain architecture, ELMO spans 323–497; the sequence is AQRDIIFELR…VVREQITRAL (175 aa). A Phosphoserine modification is found at serine 515. The region spanning 565 to 686 is the PH domain; it reads SSFRKIGNRR…LLGKDMSSEL (122 aa). The SH3-binding signature appears at 712–719; sequence PEAPPPVP. Residue tyrosine 729 is modified to Phosphotyrosine.

In terms of assembly, interacts directly with the SH3-domain of DOCK1 via its SH3-binding site. Probably forms a heterotrimeric complex with DOCK1 and RAC1. Interacts with ARHGEF16, DOCK4 and EPHA2; mediates activation of RAC1 by EPHA2. Interacts with ADGRB3. Interacts with AUTS2; the interaction is direct.

The protein localises to the cytoplasm. Its subcellular location is the cytosol. The protein resides in the membrane. Its function is as follows. Involved in cytoskeletal rearrangements required for phagocytosis of apoptotic cells and cell motility. Acts in association with DOCK1 and CRK. Was initially proposed to be required in complex with DOCK1 to activate Rac Rho small GTPases. May enhance the guanine nucleotide exchange factor (GEF) activity of DOCK1. The polypeptide is Engulfment and cell motility protein 2 (Elmo2) (Mus musculus (Mouse)).